The chain runs to 250 residues: Putative inner dynein arm light chain, axonemal (250 aa).

A coiled-coil region spans residues 168-250 (MRKALQAHEE…QLEGITAPKK (83 aa)).

This sequence belongs to the inner dynein arm light chain family.

The protein resides in the cell projection. Its subcellular location is the cilium. It localises to the dynein axonemal particle. May play a dynamic role in flagellar motility. The protein is Putative inner dynein arm light chain, axonemal of Drosophila melanogaster (Fruit fly).